Here is a 279-residue protein sequence, read N- to C-terminus: Movement protein (279 aa).

The segment at 246–279 (SESEELNVESPPAAIGSSSASRSEAFRPQVVNGL) is disordered. Low complexity predominate over residues 254–268 (ESPPAAIGSSSASRS).

Belongs to the cucumovirus movement protein family.

It is found in the host cell junction. The protein localises to the host plasmodesma. Its function is as follows. Transports viral genome to neighboring plant cells directly through plasmosdesmata, without any budding. The movement protein allows efficient cell to cell propagation, by bypassing the host cell wall barrier. Acts by forming a tubular structure at the host plasmodesmata, enlarging it enough to allow free passage of virion capsids. This chain is Movement protein, found in Cucumber mosaic virus (strain CS) (CMV).